Reading from the N-terminus, the 64-residue chain is Large ribosomal subunit protein bL35 (64 aa).

The interval 1 to 64 (MPKNKTNSGA…RKSIKKLLGK (64 aa)) is disordered.

This sequence belongs to the bacterial ribosomal protein bL35 family.

The protein is Large ribosomal subunit protein bL35 of Beutenbergia cavernae (strain ATCC BAA-8 / DSM 12333 / CCUG 43141 / JCM 11478 / NBRC 16432 / NCIMB 13614 / HKI 0122).